The following is a 252-amino-acid chain: Probable transcriptional regulatory protein Lxx10750 (252 aa).

Belongs to the TACO1 family.

The protein resides in the cytoplasm. In Leifsonia xyli subsp. xyli (strain CTCB07), this protein is Probable transcriptional regulatory protein Lxx10750.